The chain runs to 201 residues: Basic helix-loop-helix transcription factor scleraxis (201 aa).

Disordered regions lie at residues 1–92 (MSFA…NSVN) and 148–177 (AFFH…QPKQ). The span at 59 to 69 (RRAGGGGPGGR) shows a compositional bias: gly residues. The span at 70 to 88 (PGREPRQRHTANARERDRT) shows a compositional bias: basic and acidic residues. The bHLH domain maps to 75–127 (RQRHTANARERDRTNSVNTAFTALRTLIPTEPADRKLSKIETLRLASSYISHL). Residues 157–167 (SPPPPPPPPPA) are compositionally biased toward pro residues.

In terms of assembly, efficient DNA binding requires dimerization with another bHLH protein. Dimerizes and binds the E-box consensus sequence with E12.

It localises to the nucleus. Its function is as follows. Plays an early essential role in mesoderm formation, as well as a later role in formation of somite-derived chondrogenic lineages. The polypeptide is Basic helix-loop-helix transcription factor scleraxis (SCX) (Homo sapiens (Human)).